Consider the following 106-residue polypeptide: Large ribosomal subunit protein uL30 (106 aa).

This sequence belongs to the universal ribosomal protein uL30 family. In terms of assembly, part of the 50S ribosomal subunit.

This chain is Large ribosomal subunit protein uL30, found in Ruthia magnifica subsp. Calyptogena magnifica.